The primary structure comprises 317 residues: Anamorsin homolog (317 aa).

The interval 1 to 192 (MREVLVVSES…ITGVRPNWKA (192 aa)) is N-terminal SAM-like domain. The tract at residues 193–216 (KGDRKSSSIHAAPIDGYISKAPDY) is linker. 4 residues coordinate [2Fe-2S] cluster: Cys219, Cys226, Cys229, and Cys231. The tract at residues 219-231 (CSTKPRACANCTC) is fe-S binding site A. [4Fe-4S] cluster contacts are provided by Cys286, Cys289, Cys297, and Cys300. 2 short sequence motifs (cx2C motif) span residues 286–289 (CGNC) and 297–300 (CDSC). Residues 286–300 (CGNCYLGDAFRCDSC) are fe-S binding site B.

Belongs to the anamorsin family. In terms of assembly, monomer. [2Fe-2S] cluster is required as a cofactor. The cofactor is [4Fe-4S] cluster.

The protein localises to the cytoplasm. It localises to the mitochondrion intermembrane space. Component of the cytosolic iron-sulfur (Fe-S) protein assembly (CIA) machinery. Required for the maturation of extramitochondrial Fe-S proteins. Part of an electron transfer chain functioning in an early step of cytosolic Fe-S biogenesis, facilitating the de novo assembly of a [4Fe-4S] cluster on the cytosolic Fe-S scaffold complex. Electrons are transferred from NADPH via a FAD- and FMN-containing diflavin oxidoreductase. Together with the diflavin oxidoreductase, also required for the assembly of the diferric tyrosyl radical cofactor of ribonucleotide reductase (RNR), probably by providing electrons for reduction during radical cofactor maturation in the catalytic small subunit. In Theileria parva (East coast fever infection agent), this protein is Anamorsin homolog.